Consider the following 473-residue polypeptide: UDP-N-acetylmuramate--L-alanine ligase (473 aa).

ATP is bound at residue 119–125; sequence GTHGKTT.

It belongs to the MurCDEF family.

It is found in the cytoplasm. The enzyme catalyses UDP-N-acetyl-alpha-D-muramate + L-alanine + ATP = UDP-N-acetyl-alpha-D-muramoyl-L-alanine + ADP + phosphate + H(+). The protein operates within cell wall biogenesis; peptidoglycan biosynthesis. Cell wall formation. This chain is UDP-N-acetylmuramate--L-alanine ligase, found in Caulobacter vibrioides (strain NA1000 / CB15N) (Caulobacter crescentus).